A 198-amino-acid chain; its full sequence is MEHYLSLLIRSIFIENLALSFFLGMCTFLAVSKKVKTAMGLGIAVIVVQTVAVPANNLIYNYVLKDGVLVSGLDLSFLSFITFIGVIAALVQILEMALDKYFPALYNALGIFLPLITVNCAIFGGVSFMVQRDYNFVESVVYGVGSGAGWMLAIVAMAGIREKMKYSDVPQGLRGLGITFITAGLMALGFMSFSGISL.

6 helical membrane passes run Ser11 to Val31, Met39 to Ile59, Phe77 to Ala97, Gly110 to Val130, Val140 to Ile160, and Leu176 to Ile196.

The protein belongs to the NqrDE/RnfAE family. Composed of six subunits; NqrA, NqrB, NqrC, NqrD, NqrE and NqrF.

Its subcellular location is the cell inner membrane. It carries out the reaction a ubiquinone + n Na(+)(in) + NADH + H(+) = a ubiquinol + n Na(+)(out) + NAD(+). NQR complex catalyzes the reduction of ubiquinone-1 to ubiquinol by two successive reactions, coupled with the transport of Na(+) ions from the cytoplasm to the periplasm. NqrA to NqrE are probably involved in the second step, the conversion of ubisemiquinone to ubiquinol. In Aeromonas salmonicida (strain A449), this protein is Na(+)-translocating NADH-quinone reductase subunit E.